A 140-amino-acid polypeptide reads, in one-letter code: Austinoid biosynthesis clusters protein S (140 aa).

The protein belongs to the trt14 isomerase family. In terms of assembly, homodimer.

Its pathway is secondary metabolite biosynthesis; terpenoid biosynthesis. Functionally, part of the gene cluster B that mediates the biosynthesis of austinol and dehydroaustinol, two fungal meroterpenoids. The first step of the pathway is the synthesis of 3,5-dimethylorsellinic acid by the polyketide synthase ausA. 3,5-dimethylorsellinic acid is then prenylated by the polyprenyl transferase ausN. Further epoxidation by the FAD-dependent monooxygenase ausM and cyclization by the probable terpene cyclase ausL lead to the formation of protoaustinoid A. Protoaustinoid A is then oxidized to spiro-lactone preaustinoid A3 by the combined action of the FAD-binding monooxygenases ausB and ausC, and the dioxygenase ausE. Acid-catalyzed keto-rearrangement and ring contraction of the tetraketide portion of preaustinoid A3 by ausJ lead to the formation of preaustinoid A4. The aldo-keto reductase ausK, with the help of ausH, is involved in the next step by transforming preaustinoid A4 into isoaustinone which is in turn hydroxylated by the P450 monooxygenase ausI to form austinolide. Finally, the cytochrome P450 monooxygenase ausG modifies austinolide to austinol. Austinol can be further modified to dehydroaustinol which forms a diffusible complex with diorcinol that initiates conidiation. Due to genetic rearrangements of the clusters and the subsequent loss of some enzymes, the end products of the Emericella nidulans austinoid biosynthesis clusters are austinol and dehydroaustinol, even if additional enzymes, such as the O-acetyltransferase ausQ and the cytochrome P450 monooxygenase ausR are still functional. AusS is necessary for austinoids production and may play a possible function as a regulator. The sequence is that of Austinoid biosynthesis clusters protein S from Emericella nidulans (strain FGSC A4 / ATCC 38163 / CBS 112.46 / NRRL 194 / M139) (Aspergillus nidulans).